A 1255-amino-acid chain; its full sequence is DNA-directed RNA polymerase subunit beta' (1255 aa).

Zn(2+) contacts are provided by cysteine 68, cysteine 70, cysteine 83, and cysteine 86. Mg(2+)-binding residues include aspartate 457, aspartate 459, and aspartate 461. Zn(2+)-binding residues include cysteine 803, cysteine 885, cysteine 892, and cysteine 895. Residues 1220 to 1240 (NSDEEVSFTEDEYFEDEENDL) are compositionally biased toward acidic residues. Residues 1220–1255 (NSDEEVSFTEDEYFEDEENDLSTENFDDLKFSEEEE) are disordered. Over residues 1246–1255 (DDLKFSEEEE) the composition is skewed to basic and acidic residues.

Belongs to the RNA polymerase beta' chain family. The RNAP catalytic core consists of 2 alpha, 1 beta, 1 beta' and 1 omega subunit. When a sigma factor is associated with the core the holoenzyme is formed, which can initiate transcription. It depends on Mg(2+) as a cofactor. Zn(2+) serves as cofactor.

The enzyme catalyses RNA(n) + a ribonucleoside 5'-triphosphate = RNA(n+1) + diphosphate. Its function is as follows. DNA-dependent RNA polymerase catalyzes the transcription of DNA into RNA using the four ribonucleoside triphosphates as substrates. In Lachnoclostridium phytofermentans (strain ATCC 700394 / DSM 18823 / ISDg) (Clostridium phytofermentans), this protein is DNA-directed RNA polymerase subunit beta'.